The primary structure comprises 247 residues: Caffeoyl-CoA O-methyltransferase 2 (247 aa).

A substrate-binding site is contributed by lysine 21. S-adenosyl-L-methionine is bound by residues threonine 63, glutamate 85, 87-88 (GV), serine 93, aspartate 111, and alanine 140. Aspartate 163 contacts substrate. Residue aspartate 163 participates in a divalent metal cation binding. Aspartate 165 serves as a coordination point for S-adenosyl-L-methionine. Aspartate 189 and asparagine 190 together coordinate a divalent metal cation. Asparagine 194 contributes to the substrate binding site.

The protein belongs to the class I-like SAM-binding methyltransferase superfamily. Cation-dependent O-methyltransferase family. CCoAMT subfamily. A divalent metal cation is required as a cofactor.

It carries out the reaction (E)-caffeoyl-CoA + S-adenosyl-L-methionine = (E)-feruloyl-CoA + S-adenosyl-L-homocysteine + H(+). It functions in the pathway aromatic compound metabolism; phenylpropanoid biosynthesis. In terms of biological role, methylates caffeoyl-CoA to feruloyl-CoA and 5-hydroxyferuloyl-CoA to sinapoyl-CoA. Plays a role in the synthesis of feruloylated polysaccharides. Involved in the reinforcement of the plant cell wall. Also involved in the responding to wounding or pathogen challenge by the increased formation of cell wall-bound ferulic acid polymers. The chain is Caffeoyl-CoA O-methyltransferase 2 (CCOAOMT2) from Eucalyptus globulus (Tasmanian blue gum).